Reading from the N-terminus, the 260-residue chain is Carbonic anhydrase 2 (260 aa).

Ser-2 is modified (N-acetylserine). Ser-2 carries the phosphoserine modification. Residues 3–259 (HHWGYGKHNG…LKNRQIKASF (257 aa)) form the Alpha-carbonic anhydrase domain. His-64 (proton donor/acceptor) is an active-site residue. The Zn(2+) site is built by His-94, His-96, and His-119. Residues Ser-165 and Ser-172 each carry the phosphoserine modification. Substrate is bound at residue 198-199 (TT).

This sequence belongs to the alpha-carbonic anhydrase family. As to quaternary structure, interacts with SLC4A4. Interaction with SLC4A7 regulates SLC4A7 transporter activity. Interacts with SLC26A6 isoform 4 (via C-terminus cytoplasmic domain). The cofactor is Zn(2+). It depends on Co(2+) as a cofactor.

It is found in the cytoplasm. The protein resides in the cell membrane. The catalysed reaction is hydrogencarbonate + H(+) = CO2 + H2O. It catalyses the reaction urea = cyanamide + H2O. With respect to regulation, activated by X-ray, histamine, L-adrenaline, L- and D-phenylalanine, L- and D-histidine, L-His-OMe and beta-Ala-His (carnosine). Competitively inhibited by saccharin, thioxolone, coumarins, 667-coumate, celecoxib (Celebrex), valdecoxib (Bextra), SC-125, SC-560, diclofenac, acetate, azide, bromide, sulfonamide derivatives such as acetazolamide (AZA), methazolamide (MZA), ethoxzolamide (EZA), dichlorophenamide (DCP), brinzolamide, dansylamide, thiabendazole-5-sulfonamide, trifluoromethane sulfonamide and N-hydroxysulfamide, fructose-based sugar sulfamate RWJ-37497, and Foscarnet (phosphonoformate trisodium salt). Repressed strongly by hydrogen sulfide(HS) and weakly by nitrate (NO(3)). Esterase activity weakly reduced by cyanamide. N-hydroxyurea interferes with zinc binding and inhibit activity. In terms of biological role, catalyzes the reversible hydration of carbon dioxide. Can also hydrate cyanamide to urea. Stimulates the chloride-bicarbonate exchange activity of SLC26A6. Essential for bone resorption and osteoclast differentiation. Involved in the regulation of fluid secretion into the anterior chamber of the eye. Contributes to intracellular pH regulation in the duodenal upper villous epithelium during proton-coupled peptide absorption. This is Carbonic anhydrase 2 (CA2) from Homo sapiens (Human).